Reading from the N-terminus, the 941-residue chain is DNA mismatch repair protein MutS (941 aa).

Residue 613–620 participates in ATP binding; sequence GPNMAGKS.

Belongs to the DNA mismatch repair MutS family.

Functionally, this protein is involved in the repair of mismatches in DNA. It is possible that it carries out the mismatch recognition step. This protein has a weak ATPase activity. This is DNA mismatch repair protein MutS from Clostridium botulinum (strain Alaska E43 / Type E3).